Reading from the N-terminus, the 198-residue chain is Myb-related protein 340 (198 aa).

2 consecutive HTH myb-type domains span residues D10–L62 and R63–H117. 2 DNA-binding regions (H-T-H motif) span residues W38–L62 and W90–R113.

As to expression, expressed only in flowers.

It localises to the nucleus. Its function is as follows. Transcription factor. The sequence is that of Myb-related protein 340 from Antirrhinum majus (Garden snapdragon).